The primary structure comprises 116 residues: Protein Rev (116 aa).

Residues S5 and S8 each carry the phosphoserine; by host CK2 modification. The homomultimerization stretch occupies residues L18–N26. A disordered region spans residues S25 to Q49. A Nuclear localization signal and RNA-binding (RRE) motif is present at residues T34–R50. The span at Q36–E47 shows a compositional bias: basic residues. The Nuclear export signal and binding to XPO1 signature appears at L73 to D84. Phosphoserine; by host occurs at positions 92 and 99. The tract at residues S92–E116 is disordered.

It belongs to the HIV-1 REV protein family. As to quaternary structure, homomultimer; when bound to the RRE. Multimeric assembly is essential for activity and may involve XPO1. Binds to human KPNB1, XPO1, TNPO1, RANBP5 and IPO7. Interacts with the viral Integrase. Interacts with human KHDRBS1. Interacts with human NAP1; this interaction decreases Rev multimerization and stimulates its activity. Interacts with human DEAD-box helicases DDX3 and DDX24; these interactions may serve for viral RNA export to the cytoplasm and packaging, respectively. Interacts with human PSIP1; this interaction may inhibit HIV-1 DNA integration by promoting dissociation of the Integrase-LEDGF/p75 complex. In terms of processing, asymmetrically arginine dimethylated at one site by host PRMT6. Methylation impairs the RNA-binding activity and export of viral RNA from the nucleus to the cytoplasm. Phosphorylated by protein kinase CK2. Presence of, and maybe binding to the N-terminus of the regulatory beta subunit of CK2 is necessary for CK2-mediated Rev's phosphorylation.

Its subcellular location is the host nucleus. It is found in the host nucleolus. The protein localises to the host cytoplasm. In terms of biological role, escorts unspliced or incompletely spliced viral pre-mRNAs (late transcripts) out of the nucleus of infected cells. These pre-mRNAs carry a recognition sequence called Rev responsive element (RRE) located in the env gene, that is not present in fully spliced viral mRNAs (early transcripts). This function is essential since most viral proteins are translated from unspliced or partially spliced pre-mRNAs which cannot exit the nucleus by the pathway used by fully processed cellular mRNAs. Rev itself is translated from a fully spliced mRNA that readily exits the nucleus. Rev's nuclear localization signal (NLS) binds directly to KPNB1/Importin beta-1 without previous binding to KPNA1/Importin alpha-1. KPNB1 binds to the GDP bound form of RAN (Ran-GDP) and targets Rev to the nucleus. In the nucleus, the conversion from Ran-GDP to Ran-GTP dissociates Rev from KPNB1 and allows Rev's binding to the RRE in viral pre-mRNAs. Rev multimerization on the RRE via cooperative assembly exposes its nuclear export signal (NES) to the surface. Rev can then form a complex with XPO1/CRM1 and Ran-GTP, leading to nuclear export of the complex. Conversion from Ran-GTP to Ran-GDP mediates dissociation of the Rev/RRE/XPO1/RAN complex, so that Rev can return to the nucleus for a subsequent round of export. Beside KPNB1, also seems to interact with TNPO1/Transportin-1, RANBP5/IPO5 and IPO7/RANBP7 for nuclear import. The nucleoporin-like HRB/RIP is an essential cofactor that probably indirectly interacts with Rev to release HIV RNAs from the perinuclear region to the cytoplasm. This chain is Protein Rev, found in Human immunodeficiency virus type 1 group M subtype B (strain 89.6) (HIV-1).